Consider the following 194-residue polypeptide: MLDREGFRPNVGIILINTRNEVWWGKRVREHSWQFPQGGIKFGETPEQAMYRELEEEVGLRAEHVKIIGRTRDWLRYEVPDHFIKREIRGHYKGQKQIWFLLRMVGRDCDVNLRMTEHPEFDAWRWHDYWVPLDVVIEFKRDVYQRALQELSRFLSRPTQHVPPQHNTARYLRQTHASRKPDEPSTEKTKPDNE.

The 144-residue stretch at 6–149 folds into the Nudix hydrolase domain; sequence GFRPNVGIIL…KRDVYQRALQ (144 aa). Residues 38–59 carry the Nudix box motif; sequence GGIKFGETPEQAMYRELEEEVG. Residues 158-194 form a disordered region; it reads PTQHVPPQHNTARYLRQTHASRKPDEPSTEKTKPDNE. Basic and acidic residues predominate over residues 179 to 194; that stretch reads RKPDEPSTEKTKPDNE.

Belongs to the Nudix hydrolase family. RppH subfamily. A divalent metal cation serves as cofactor.

Functionally, accelerates the degradation of transcripts by removing pyrophosphate from the 5'-end of triphosphorylated RNA, leading to a more labile monophosphorylated state that can stimulate subsequent ribonuclease cleavage. This is RNA pyrophosphohydrolase from Janthinobacterium sp. (strain Marseille) (Minibacterium massiliensis).